The chain runs to 521 residues: Ribonuclease Y (521 aa).

A helical transmembrane segment spans residues 5–25 (LLLILTAVIMLIVGFAVGAIL). Residues 77–107 (ELKDRRGEVQKQENRLIQREETMDRKDATLD) are disordered. The 61-residue stretch at 211 to 271 (TVTVVTLPND…IRREIARMTL (61 aa)) folds into the KH domain. An HD domain is found at 337-430 (VLNHSIEVAK…VAASDAISAA (94 aa)).

Belongs to the RNase Y family.

It is found in the cell membrane. Its function is as follows. Endoribonuclease that initiates mRNA decay. The polypeptide is Ribonuclease Y (Latilactobacillus sakei subsp. sakei (strain 23K) (Lactobacillus sakei subsp. sakei)).